We begin with the raw amino-acid sequence, 61 residues long: Neurotoxin-like protein 1 (61 aa).

Cystine bridges form between Cys-3-Cys-24, Cys-17-Cys-38, Cys-42-Cys-53, and Cys-54-Cys-59.

In terms of tissue distribution, expressed by the venom gland.

The protein localises to the secreted. This chain is Neurotoxin-like protein 1, found in Causus rhombeatus (Rhombic night adder).